Consider the following 218-residue polypeptide: Probable nicotinate-nucleotide adenylyltransferase (218 aa).

The protein belongs to the NadD family.

It carries out the reaction nicotinate beta-D-ribonucleotide + ATP + H(+) = deamido-NAD(+) + diphosphate. It participates in cofactor biosynthesis; NAD(+) biosynthesis; deamido-NAD(+) from nicotinate D-ribonucleotide: step 1/1. Its function is as follows. Catalyzes the reversible adenylation of nicotinate mononucleotide (NaMN) to nicotinic acid adenine dinucleotide (NaAD). This chain is Probable nicotinate-nucleotide adenylyltransferase, found in Helicobacter hepaticus (strain ATCC 51449 / 3B1).